A 386-amino-acid polypeptide reads, in one-letter code: L-olivosyl-oleandolide 3-O-methyltransferase (386 aa).

Residues S166, 195–201 (EIGIGGY), S210, D227, 245–246 (RQ), and D268 contribute to the S-adenosyl-L-methionine site. Residue D268 participates in Mg(2+) binding. Catalysis depends on H271, which acts as the Proton acceptor. Residues E296 and D297 each coordinate Mg(2+). The tract at residues 364–386 (RRAINKEGGIPHTVPREPFWNDN) is disordered.

This sequence belongs to the methyltransferase OleY/MycE family. Homodimer. Mg(2+) serves as cofactor.

The enzyme catalyses L-olivosyl-oleandolide + S-adenosyl-L-methionine = L-oleandrosyl-oleandolide + S-adenosyl-L-homocysteine + H(+). Its pathway is antibiotic biosynthesis. Its function is as follows. 3-O-methyltransferase involved in the synthesis of L-oleandrose, a sugar attached to oleandomycin, a macrolide antibiotic. Acts on monoglycosylated macrolactones and mediates the conversion of L-olivosyl-erythronolide B into its 3-O-methylated derivative, L-oleandrosyl-erythronolide B. Also able to methylate other monoglycosylated derivatives, such as L-rhamnosyl- and L-mycarosyl-erythronolide B. The polypeptide is L-olivosyl-oleandolide 3-O-methyltransferase (oleY) (Streptomyces antibioticus).